Reading from the N-terminus, the 274-residue chain is Small ribosomal subunit protein uS3 (274 aa).

The region spanning 38 to 106 (IRRLLSSGLE…QVQLNILEVK (69 aa)) is the KH type-2 domain. The disordered stretch occupies residues 215–274 (AAAAPAGADRPRRERPSGTRPRRSGASGTTATGTDAGRAAGGEEAAPDAAAPVEAQSTES). The segment covering 238–266 (SGASGTTATGTDAGRAAGGEEAAPDAAAP) has biased composition (low complexity).

The protein belongs to the universal ribosomal protein uS3 family. As to quaternary structure, part of the 30S ribosomal subunit. Forms a tight complex with proteins S10 and S14.

Its function is as follows. Binds the lower part of the 30S subunit head. Binds mRNA in the 70S ribosome, positioning it for translation. The polypeptide is Small ribosomal subunit protein uS3 (Mycobacterium tuberculosis (strain ATCC 25177 / H37Ra)).